Consider the following 180-residue polypeptide: Large ribosomal subunit protein uL5 (180 aa).

The protein belongs to the universal ribosomal protein uL5 family. In terms of assembly, part of the 50S ribosomal subunit; part of the 5S rRNA/L5/L18/L25 subcomplex. Contacts the 5S rRNA and the P site tRNA. Forms a bridge to the 30S subunit in the 70S ribosome.

Functionally, this is one of the proteins that bind and probably mediate the attachment of the 5S RNA into the large ribosomal subunit, where it forms part of the central protuberance. In the 70S ribosome it contacts protein S13 of the 30S subunit (bridge B1b), connecting the 2 subunits; this bridge is implicated in subunit movement. Contacts the P site tRNA; the 5S rRNA and some of its associated proteins might help stabilize positioning of ribosome-bound tRNAs. The sequence is that of Large ribosomal subunit protein uL5 from Streptococcus pneumoniae (strain JJA).